A 342-amino-acid polypeptide reads, in one-letter code: Nucleoid-associated protein Sbal223_1817 (342 aa).

It belongs to the YejK family.

The protein localises to the cytoplasm. It is found in the nucleoid. In Shewanella baltica (strain OS223), this protein is Nucleoid-associated protein Sbal223_1817.